A 601-amino-acid chain; its full sequence is Probable Xaa-Pro aminopeptidase P (601 aa).

Mn(2+) is bound by residues Asp-398, Asp-409, Glu-507, and Glu-521.

This sequence belongs to the peptidase M24B family. Requires Mn(2+) as cofactor.

It catalyses the reaction Release of any N-terminal amino acid, including proline, that is linked to proline, even from a dipeptide or tripeptide.. Its function is as follows. Catalyzes the removal of a penultimate prolyl residue from the N-termini of peptides. The polypeptide is Probable Xaa-Pro aminopeptidase P (ampp) (Sclerotinia sclerotiorum (strain ATCC 18683 / 1980 / Ss-1) (White mold)).